Consider the following 79-residue polypeptide: Small ribosomal subunit protein bS16 (79 aa).

This sequence belongs to the bacterial ribosomal protein bS16 family.

This is Small ribosomal subunit protein bS16 from Marinobacter nauticus (strain ATCC 700491 / DSM 11845 / VT8) (Marinobacter aquaeolei).